Here is a 61-residue protein sequence, read N- to C-terminus: Small ribosomal subunit protein uS14 (61 aa).

Zn(2+) contacts are provided by cysteine 24, cysteine 27, cysteine 40, and cysteine 43.

The protein belongs to the universal ribosomal protein uS14 family. Zinc-binding uS14 subfamily. Part of the 30S ribosomal subunit. Contacts proteins S3 and S10. Zn(2+) is required as a cofactor.

Binds 16S rRNA, required for the assembly of 30S particles and may also be responsible for determining the conformation of the 16S rRNA at the A site. The protein is Small ribosomal subunit protein uS14 of Geobacter sp. (strain M21).